Here is a 563-residue protein sequence, read N- to C-terminus: Tripeptidyl-peptidase 1 (563 aa).

A signal peptide spans 1-19; that stretch reads MRLRTCLLGLLALCVASKC. A propeptide spans 20-195 (removed in mature form); it reads SYSPEPDQQR…PEPQVSGTVG (176 aa). Cys111 and Cys122 are disulfide-bonded. The region spanning 199-563 is the Peptidase S53 domain; the sequence is GVTPSVIRQR…PALLKALIKP (365 aa). N-linked (GlcNAc...) asparagine glycosylation is found at Asn210 and Asn222. Active-site charge relay system residues include Glu272 and Asp276. N-linked (GlcNAc...) asparagine glycosylation is found at Asn286, Asn313, and Asn443. Cystine bridges form between Cys365–Cys526 and Cys522–Cys537. Catalysis depends on Ser475, which acts as the Charge relay system. 2 residues coordinate Ca(2+): Asp517 and Val518. Positions 539, 541, and 543 each coordinate Ca(2+).

As to quaternary structure, monomer. Interacts with CLN5. Interacts with CLN3. Ca(2+) is required as a cofactor. In terms of processing, activated by autocatalytic proteolytical processing upon acidification. N-glycosylation is required for processing and activity.

Its subcellular location is the lysosome. It localises to the melanosome. It carries out the reaction Release of an N-terminal tripeptide from a polypeptide, but also has endopeptidase activity.. In terms of biological role, lysosomal serine protease with tripeptidyl-peptidase I activity. May act as a non-specific lysosomal peptidase which generates tripeptides from the breakdown products produced by lysosomal proteinases. Requires substrates with an unsubstituted N-terminus. This chain is Tripeptidyl-peptidase 1 (TPP1), found in Canis lupus familiaris (Dog).